The chain runs to 299 residues: Protease HtpX homolog (299 aa).

2 helical membrane passes run I15 to F35 and G39 to F59. Zn(2+) is bound at residue H143. E144 is a catalytic residue. Residue H147 coordinates Zn(2+). 2 helical membrane passes run I158–W178 and I198–V218. E227 lines the Zn(2+) pocket.

Belongs to the peptidase M48B family. It depends on Zn(2+) as a cofactor.

It localises to the cell membrane. This Streptococcus pneumoniae (strain Taiwan19F-14) protein is Protease HtpX homolog.